A 218-amino-acid polypeptide reads, in one-letter code: LexA repressor (218 aa).

A DNA-binding region (H-T-H motif) is located at residues 28–48 (RAEIAAEFGFSSPNSAEEHLR). Active-site for autocatalytic cleavage activity residues include Ser136 and Lys173.

This sequence belongs to the peptidase S24 family. Homodimer.

It carries out the reaction Hydrolysis of Ala-|-Gly bond in repressor LexA.. Its function is as follows. Represses a number of genes involved in the response to DNA damage (SOS response), including recA and lexA. In the presence of single-stranded DNA, RecA interacts with LexA causing an autocatalytic cleavage which disrupts the DNA-binding part of LexA, leading to derepression of the SOS regulon and eventually DNA repair. The chain is LexA repressor from Cupriavidus metallidurans (strain ATCC 43123 / DSM 2839 / NBRC 102507 / CH34) (Ralstonia metallidurans).